The chain runs to 307 residues: UDP-3-O-acyl-N-acetylglucosamine deacetylase (307 aa).

Residues H78, H241, and D245 each coordinate Zn(2+). The Proton donor role is filled by H268.

The protein belongs to the LpxC family. Zn(2+) is required as a cofactor.

It carries out the reaction a UDP-3-O-[(3R)-3-hydroxyacyl]-N-acetyl-alpha-D-glucosamine + H2O = a UDP-3-O-[(3R)-3-hydroxyacyl]-alpha-D-glucosamine + acetate. It participates in glycolipid biosynthesis; lipid IV(A) biosynthesis; lipid IV(A) from (3R)-3-hydroxytetradecanoyl-[acyl-carrier-protein] and UDP-N-acetyl-alpha-D-glucosamine: step 2/6. In terms of biological role, catalyzes the hydrolysis of UDP-3-O-myristoyl-N-acetylglucosamine to form UDP-3-O-myristoylglucosamine and acetate, the committed step in lipid A biosynthesis. The polypeptide is UDP-3-O-acyl-N-acetylglucosamine deacetylase (Polaromonas naphthalenivorans (strain CJ2)).